The primary structure comprises 253 residues: Geranylgeranylglyceryl phosphate synthase (253 aa).

Residues aspartate 23 and serine 52 each coordinate Mg(2+). Sn-glycerol 1-phosphate is bound by residues tyrosine 171–glycine 177, glycine 202–glycine 203, and glycine 224–threonine 225.

It belongs to the GGGP/HepGP synthase family. Group II subfamily. As to quaternary structure, homodimer. Requires Mg(2+) as cofactor.

The protein localises to the cytoplasm. The enzyme catalyses sn-glycerol 1-phosphate + (2E,6E,10E)-geranylgeranyl diphosphate = sn-3-O-(geranylgeranyl)glycerol 1-phosphate + diphosphate. Its pathway is membrane lipid metabolism; glycerophospholipid metabolism. Its activity is regulated as follows. Inhibited by high concentrations of magnesium (&gt;10 mM) and by EDTA in vitro. Its function is as follows. Prenyltransferase that catalyzes the transfer of the geranylgeranyl moiety of geranylgeranyl diphosphate (GGPP) to the C3 hydroxyl of sn-glycerol-1-phosphate (G1P). This reaction is the first ether-bond-formation step in the biosynthesis of archaeal membrane lipids. Cannot use sn-glycerol-3-phosphate (G3P) as substrate. This Thermoplasma acidophilum (strain ATCC 25905 / DSM 1728 / JCM 9062 / NBRC 15155 / AMRC-C165) protein is Geranylgeranylglyceryl phosphate synthase.